The primary structure comprises 264 residues: Thymidylate synthase (264 aa).

A dUMP-binding site is contributed by Arg21. Position 51 (His51) interacts with (6R)-5,10-methylene-5,6,7,8-tetrahydrofolate. 126–127 (RR) contributes to the dUMP binding site. Catalysis depends on Cys146, which acts as the Nucleophile. DUMP contacts are provided by residues 166 to 169 (RSCD), Asn177, and 207 to 209 (HLY). Asp169 contributes to the (6R)-5,10-methylene-5,6,7,8-tetrahydrofolate binding site. Ala263 is a (6R)-5,10-methylene-5,6,7,8-tetrahydrofolate binding site.

Belongs to the thymidylate synthase family. Bacterial-type ThyA subfamily. In terms of assembly, homodimer.

The protein resides in the cytoplasm. The catalysed reaction is dUMP + (6R)-5,10-methylene-5,6,7,8-tetrahydrofolate = 7,8-dihydrofolate + dTMP. It participates in pyrimidine metabolism; dTTP biosynthesis. In terms of biological role, catalyzes the reductive methylation of 2'-deoxyuridine-5'-monophosphate (dUMP) to 2'-deoxythymidine-5'-monophosphate (dTMP) while utilizing 5,10-methylenetetrahydrofolate (mTHF) as the methyl donor and reductant in the reaction, yielding dihydrofolate (DHF) as a by-product. This enzymatic reaction provides an intracellular de novo source of dTMP, an essential precursor for DNA biosynthesis. This is Thymidylate synthase from Baumannia cicadellinicola subsp. Homalodisca coagulata.